Consider the following 1071-residue polypeptide: Carbamoyl phosphate synthase pyrimidine-specific large chain (1071 aa).

The segment at 1–401 (MPKRVDINKI…SLLKAVRSLE (401 aa)) is carboxyphosphate synthetic domain. Arg-129, Arg-169, Gly-175, Gly-176, Lys-208, Ile-210, Glu-215, Gly-241, Ile-242, His-243, Gln-284, and Glu-298 together coordinate ATP. The region spanning 133 to 327 (RTLMNELNEP…IAKLAAKIAV (195 aa)) is the ATP-grasp 1 domain. 3 residues coordinate Mg(2+): Gln-284, Glu-298, and Asn-300. Mn(2+)-binding residues include Gln-284, Glu-298, and Asn-300. The tract at residues 402 to 546 (ADVYHLELKD…YSTYEEENES (145 aa)) is oligomerization domain. Residues 547–929 (VVTDKKSVMV…ALYKALIASG (383 aa)) are carbamoyl phosphate synthetic domain. Positions 671–861 (EQALGELGVP…MANLATKIIL (191 aa)) constitute an ATP-grasp 2 domain. The ATP site is built by Arg-707, Arg-746, Leu-748, Glu-752, Gly-777, Val-778, His-779, Ser-780, Gln-820, and Glu-832. 3 residues coordinate Mg(2+): Gln-820, Glu-832, and Asn-834. The Mn(2+) site is built by Gln-820, Glu-832, and Asn-834. The region spanning 930-1071 (IQIPNYGSVL…NTNQEAAVTI (142 aa)) is the MGS-like domain. The segment at 930–1071 (IQIPNYGSVL…NTNQEAAVTI (142 aa)) is allosteric domain.

The protein belongs to the CarB family. In terms of assembly, composed of two chains; the small (or glutamine) chain promotes the hydrolysis of glutamine to ammonia, which is used by the large (or ammonia) chain to synthesize carbamoyl phosphate. Tetramer of heterodimers (alpha,beta)4. Interacts with BrxC. Mg(2+) is required as a cofactor. Mn(2+) serves as cofactor.

The enzyme catalyses hydrogencarbonate + L-glutamine + 2 ATP + H2O = carbamoyl phosphate + L-glutamate + 2 ADP + phosphate + 2 H(+). It catalyses the reaction hydrogencarbonate + NH4(+) + 2 ATP = carbamoyl phosphate + 2 ADP + phosphate + 2 H(+). It participates in amino-acid biosynthesis; L-arginine biosynthesis; carbamoyl phosphate from bicarbonate: step 1/1. Its pathway is pyrimidine metabolism; UMP biosynthesis via de novo pathway; (S)-dihydroorotate from bicarbonate: step 1/3. Functionally, small subunit of the glutamine-dependent carbamoyl phosphate synthetase (CPSase). CPSase catalyzes the formation of carbamoyl phosphate from the ammonia moiety of glutamine, carbonate, and phosphate donated by ATP, constituting the first step of the biosynthetic pathway leading to pyrimidine nucleotides. The large subunit (synthetase) binds the substrates ammonia (free or transferred from glutamine from the small subunit), hydrogencarbonate and ATP and carries out an ATP-coupled ligase reaction, activating hydrogencarbonate by forming carboxy phosphate which reacts with ammonia to form carbamoyl phosphate. The chain is Carbamoyl phosphate synthase pyrimidine-specific large chain (pyrAB) from Bacillus subtilis (strain 168).